The following is a 372-amino-acid chain: Putative glutamate--cysteine ligase 2 (372 aa).

It belongs to the glutamate--cysteine ligase type 2 family. YbdK subfamily. Homodimer.

It carries out the reaction L-cysteine + L-glutamate + ATP = gamma-L-glutamyl-L-cysteine + ADP + phosphate + H(+). ATP-dependent carboxylate-amine ligase which exhibits weak glutamate--cysteine ligase activity. The protein is Putative glutamate--cysteine ligase 2 (ybdK) of Escherichia coli O17:K52:H18 (strain UMN026 / ExPEC).